The primary structure comprises 153 residues: Large ribosomal subunit protein bL9 (153 aa).

The protein belongs to the bacterial ribosomal protein bL9 family.

Its function is as follows. Binds to the 23S rRNA. This Synechococcus sp. (strain JA-3-3Ab) (Cyanobacteria bacterium Yellowstone A-Prime) protein is Large ribosomal subunit protein bL9.